We begin with the raw amino-acid sequence, 419 residues long: Protein distal antenna-related (419 aa).

Residues 15 to 66 (TRGKRPLRNLTPNDKVRAIQRIHNGETKASVSRDIGVPESTLRGWCKNEQKL) enclose the HTH psq-type domain. Residues 42 to 62 (KASVSRDIGVPESTLRGWCKN) constitute a DNA-binding region (H-T-H motif). Disordered stretches follow at residues 333–359 (QPGG…PDLE) and 378–419 (EASN…DAEQ).

In terms of assembly, interacts with itself, dan, ey and dac to form a complex (or complexes) containing the RD factors. In terms of tissue distribution, coexpressed with dan in the presumptive distal antenna, but not in the leg imaginal disk. Both proteins are also expressed in the brain and the eye region of the eye-antenna disk. First detected in early L3 eye disks in cells surrounding the newly initiated morphogenetic furrow. Highly expressed in evenly spaced clusters of cells anterior to the furrow, lower levels within and posterior to the furrow.

The protein resides in the nucleus. In terms of biological role, probable transcription factor with a role in the retinal determination (RD) network. Regulates ato expression and is required for normal R8 induction and differentiation. Danr appears to repress Dan expression, but Dan is required for Danr expression anterior to the morphogenetic furrow (MF). Dan and Danr lie downstream of so and require dac function for highest levels of expression. Contributes to differentiation of antenna-specific characteristics; effector gene that acts downstream of homothorax (hth), Distal-less (Dll), cut (ct) and spineless (ss) genes to control differentiation of distal antennal structures. The polypeptide is Protein distal antenna-related (Drosophila melanogaster (Fruit fly)).